The following is a 311-amino-acid chain: Ketoisovalerate oxidoreductase subunit VorB (311 aa).

Heterotetramer of one alpha, one beta, one delta and one gamma chain.

It catalyses the reaction 3-methyl-2-oxobutanoate + 2 oxidized [2Fe-2S]-[ferredoxin] + CoA = 2-methylpropanoyl-CoA + 2 reduced [2Fe-2S]-[ferredoxin] + CO2 + H(+). The chain is Ketoisovalerate oxidoreductase subunit VorB (vorB) from Pyrococcus abyssi (strain GE5 / Orsay).